Here is a 479-residue protein sequence, read N- to C-terminus: Proline--tRNA ligase (479 aa).

This sequence belongs to the class-II aminoacyl-tRNA synthetase family. ProS type 3 subfamily. As to quaternary structure, homodimer.

It is found in the cytoplasm. It catalyses the reaction tRNA(Pro) + L-proline + ATP = L-prolyl-tRNA(Pro) + AMP + diphosphate. Functionally, catalyzes the attachment of proline to tRNA(Pro) in a two-step reaction: proline is first activated by ATP to form Pro-AMP and then transferred to the acceptor end of tRNA(Pro). This chain is Proline--tRNA ligase, found in Lachnospira eligens (strain ATCC 27750 / DSM 3376 / VPI C15-48 / C15-B4) (Eubacterium eligens).